A 906-amino-acid chain; its full sequence is Protein translocase subunit SecA (906 aa).

Residues Gln86, 104 to 108 (GEGKT), and Asp511 contribute to the ATP site. Basic and acidic residues-rich tracts occupy residues 853–865 (HESVIDNNQRHDE) and 877–888 (VRREGPKVKRND). The disordered stretch occupies residues 853–906 (HESVIDNNQRHDEDEQEETPKVQQVRREGPKVKRNDPCPCGSGKKYKQCHGKVE). Positions 890, 892, 901, and 902 each coordinate Zn(2+). The span at 896 to 906 (KKYKQCHGKVE) shows a compositional bias: basic residues.

It belongs to the SecA family. As to quaternary structure, monomer and homodimer. Part of the essential Sec protein translocation apparatus which comprises SecA, SecYEG and auxiliary proteins SecDF-YajC and YidC. Zn(2+) is required as a cofactor.

Its subcellular location is the cell inner membrane. The protein resides in the cytoplasm. The catalysed reaction is ATP + H2O + cellular proteinSide 1 = ADP + phosphate + cellular proteinSide 2.. In terms of biological role, part of the Sec protein translocase complex. Interacts with the SecYEG preprotein conducting channel. Has a central role in coupling the hydrolysis of ATP to the transfer of proteins into and across the cell membrane, serving both as a receptor for the preprotein-SecB complex and as an ATP-driven molecular motor driving the stepwise translocation of polypeptide chains across the membrane. This is Protein translocase subunit SecA from Francisella tularensis subsp. novicida (strain U112).